The chain runs to 353 residues: Phosphate acyltransferase (353 aa).

Belongs to the PlsX family. Homodimer. Probably interacts with PlsY.

Its subcellular location is the cytoplasm. It catalyses the reaction a fatty acyl-[ACP] + phosphate = an acyl phosphate + holo-[ACP]. The protein operates within lipid metabolism; phospholipid metabolism. Catalyzes the reversible formation of acyl-phosphate (acyl-PO(4)) from acyl-[acyl-carrier-protein] (acyl-ACP). This enzyme utilizes acyl-ACP as fatty acyl donor, but not acyl-CoA. The protein is Phosphate acyltransferase of Rhodopseudomonas palustris (strain ATCC BAA-98 / CGA009).